We begin with the raw amino-acid sequence, 299 residues long: MACSHQKNEQMRVGKPKWLRRSLPTGPEYEKIRTLLKGSGLTTVCQEAQCPNQFECYSKGTATFMIMGDHCTRNCRFCAVAHGPKALPDEDEAERVADAVSLLGLRYAVITSVTRDDLADGGASCFVRVIEAIRKKNPKTLIEVLIPDLAGNWGALQTILDARPDVLNHNIETVPRLYSVARPGAEYRRSLELLREVRRRAPQMVTKTGMMLGLGEETEELYATWQDLRESDCDILTMGQYLQPTVDHLLVQRFVEPTEFDRLGDVALAKDFLAVASGPFVRSSYEAEKLFRKAELARK.

[4Fe-4S] cluster is bound by residues Cys-45, Cys-50, Cys-56, Cys-71, Cys-75, Cys-78, and Ser-284. The 217-residue stretch at 57-273 (YSKGTATFMI…GDVALAKDFL (217 aa)) folds into the Radical SAM core domain.

This sequence belongs to the radical SAM superfamily. Lipoyl synthase family. Requires [4Fe-4S] cluster as cofactor.

The protein localises to the cytoplasm. It carries out the reaction [[Fe-S] cluster scaffold protein carrying a second [4Fe-4S](2+) cluster] + N(6)-octanoyl-L-lysyl-[protein] + 2 oxidized [2Fe-2S]-[ferredoxin] + 2 S-adenosyl-L-methionine + 4 H(+) = [[Fe-S] cluster scaffold protein] + N(6)-[(R)-dihydrolipoyl]-L-lysyl-[protein] + 4 Fe(3+) + 2 hydrogen sulfide + 2 5'-deoxyadenosine + 2 L-methionine + 2 reduced [2Fe-2S]-[ferredoxin]. Its pathway is protein modification; protein lipoylation via endogenous pathway; protein N(6)-(lipoyl)lysine from octanoyl-[acyl-carrier-protein]: step 2/2. In terms of biological role, catalyzes the radical-mediated insertion of two sulfur atoms into the C-6 and C-8 positions of the octanoyl moiety bound to the lipoyl domains of lipoate-dependent enzymes, thereby converting the octanoylated domains into lipoylated derivatives. The sequence is that of Lipoyl synthase from Desulfotalea psychrophila (strain LSv54 / DSM 12343).